Reading from the N-terminus, the 918-residue chain is Chitin synthase C (918 aa).

The interval 1 to 63 is disordered; that stretch reads MSYNRLGDPY…EMPSSDRLAE (63 aa). Low complexity predominate over residues 22 to 37; the sequence is NPSSLSNRSPSPGRPL. Transmembrane regions (helical) follow at residues 562-581, 605-625, 637-657, and 672-692; these read WLNG…YQLW, LFAW…TTYL, VLGV…FVLS, and MVYL…FVTV. An N-linked (GlcNAc...) asparagine glycan is attached at asparagine 712. 3 consecutive transmembrane segments (helical) span residues 715–735, 845–865, and 890–910; these read FFSI…ASII, VVLV…SSAG, and VVLW…MWFL.

It belongs to the chitin synthase family. Class I subfamily. Mainly expressed in hyphae and conidiphores. Relatively strongly expressed in young cleistothecia and in mature ascospores, but negligible in Huelle cells.

It is found in the cell membrane. Its subcellular location is the cell septum. The protein resides in the cell tip. It carries out the reaction [(1-&gt;4)-N-acetyl-beta-D-glucosaminyl](n) + UDP-N-acetyl-alpha-D-glucosamine = [(1-&gt;4)-N-acetyl-beta-D-glucosaminyl](n+1) + UDP + H(+). Functionally, polymerizes chitin, a structural polymer of the cell wall and septum, by transferring the sugar moiety of UDP-GlcNAc to the non-reducing end of the growing chitin polymer. ChsC and chsA share critical functions in hyphal wall integrity and differentiation. ChsA and chsC share also overlapping roles in septum formation. The sequence is that of Chitin synthase C from Emericella nidulans (strain FGSC A4 / ATCC 38163 / CBS 112.46 / NRRL 194 / M139) (Aspergillus nidulans).